The sequence spans 278 residues: MNNILFEEVLNVTDFTTSRQLTLWKREDLQSPQLDDVAEEVPVALVYNGISHVVMMASPKDLTHFAMGFSLSEGIIDSPREIYGMDVVPSCNGLEVQIDLSSRRFMGLKARRRALAGRTGCGVCGVEQLNDIGKPVQPLPFSQTFNLGNLDRALKHLNDFQPTGKLTGCTHAAAWVMPSGELAGGHEDVGRHVALDKLLGRRATEGEEWRQGAALVSSRASYEMVQKSAMCGVEILFAVSAATTLAVDVAERCNLTLVGFCKPGRATIYTHPQRLIAD.

Cys121 serves as the catalytic Cysteine persulfide intermediate. 260 to 265 (FCKPGR) lines the Mo-bis(molybdopterin guanine dinucleotide) pocket.

Belongs to the FdhD family.

The protein resides in the cytoplasm. Required for formate dehydrogenase (FDH) activity. Acts as a sulfur carrier protein that transfers sulfur from IscS to the molybdenum cofactor prior to its insertion into FDH. This chain is Sulfur carrier protein FdhD, found in Salmonella choleraesuis (strain SC-B67).